The chain runs to 407 residues: NAD(P)H-quinone oxidoreductase subunit 1 (407 aa).

9 helical membrane-spanning segments follow: residues 28 to 48, 96 to 116, 127 to 147, 175 to 195, 203 to 223, 267 to 287, 309 to 329, 347 to 367, and 374 to 394; these read WLPL…IAAV, WLFT…YLVI, ITIG…GALM, LALS…VDIV, LFSF…IFLI, LILA…FIVP, ALVG…LAIL, WKFL…LVLL, and TLPL…AMSL.

Belongs to the complex I subunit 1 family. As to quaternary structure, NDH-1 is composed of at least 11 different subunits.

Its subcellular location is the cell inner membrane. The enzyme catalyses a plastoquinone + NADH + (n+1) H(+)(in) = a plastoquinol + NAD(+) + n H(+)(out). It catalyses the reaction a plastoquinone + NADPH + (n+1) H(+)(in) = a plastoquinol + NADP(+) + n H(+)(out). In terms of biological role, NDH-1 shuttles electrons from an unknown electron donor, via FMN and iron-sulfur (Fe-S) centers, to quinones in the respiratory and/or the photosynthetic chain. The immediate electron acceptor for the enzyme in this species is believed to be plastoquinone. Couples the redox reaction to proton translocation, and thus conserves the redox energy in a proton gradient. The protein is NAD(P)H-quinone oxidoreductase subunit 1 of Gloeobacter violaceus (strain ATCC 29082 / PCC 7421).